The primary structure comprises 152 residues: Large ribosomal subunit protein bL17 (152 aa).

The interval 121 to 140 (APSASQKTGKQDRAKRVKGS) is disordered.

It belongs to the bacterial ribosomal protein bL17 family. As to quaternary structure, part of the 50S ribosomal subunit. Contacts protein L32.

This Pelodictyon phaeoclathratiforme (strain DSM 5477 / BU-1) protein is Large ribosomal subunit protein bL17.